Here is a 256-residue protein sequence, read N- to C-terminus: Enolase-phosphatase E1 (256 aa).

Mg(2+) contacts are provided by Asp14 and Glu16. Residues 142 to 143 and Lys176 each bind substrate; that span reads SS. Position 201 (Asp201) interacts with Mg(2+).

Belongs to the HAD-like hydrolase superfamily. MasA/MtnC family. As to quaternary structure, monomer. Mg(2+) serves as cofactor.

It is found in the cytoplasm. The protein resides in the nucleus. The enzyme catalyses 5-methylsulfanyl-2,3-dioxopentyl phosphate + H2O = 1,2-dihydroxy-5-(methylsulfanyl)pent-1-en-3-one + phosphate. It participates in amino-acid biosynthesis; L-methionine biosynthesis via salvage pathway; L-methionine from S-methyl-5-thio-alpha-D-ribose 1-phosphate: step 3/6. Its pathway is amino-acid biosynthesis; L-methionine biosynthesis via salvage pathway; L-methionine from S-methyl-5-thio-alpha-D-ribose 1-phosphate: step 4/6. In terms of biological role, bifunctional enzyme that catalyzes the enolization of 2,3-diketo-5-methylthiopentyl-1-phosphate (DK-MTP-1-P) into the intermediate 2-hydroxy-3-keto-5-methylthiopentenyl-1-phosphate (HK-MTPenyl-1-P), which is then dephosphorylated to form the acireductone 1,2-dihydroxy-3-keto-5-methylthiopentene (DHK-MTPene). In Drosophila erecta (Fruit fly), this protein is Enolase-phosphatase E1.